Here is a 7081-residue protein sequence, read N- to C-terminus: Leucine-rich repeat transmembrane protein CCDC168 (7081 aa).

The chain crosses the membrane as a helical span at residues 37 to 57 (WVAIFFIILLGIIFEIILMKA). 2 LRR repeats span residues 233 to 256 (PCPL…VRNQ) and 420 to 445 (NAEF…SVKA). The segment at 717–745 (EDLQSSENSHLQLSNGEELPTSTPKTQRC) is disordered. The segment covering 718–742 (DLQSSENSHLQLSNGEELPTSTPKT) has biased composition (polar residues). Residues 865-890 (ADTLRIIRLSHSASKQEKLPDEKETQ) form an LRR 3 repeat. Residues 943–1009 (QISSGSSKAP…DPKNPLTMPE (67 aa)) are disordered. The span at 958-970 (VQPQTLSTQTILE) shows a compositional bias: polar residues. The span at 981 to 999 (QVEKVKQSTDRPTDRESAG) shows a compositional bias: basic and acidic residues. The LRR 4 repeat unit spans residues 1050–1075 (LPAVALGSFNNHLLTLPYFKRQEIKK). Composition is skewed to polar residues over residues 1274–1286 (KCTA…SPIS) and 1295–1304 (LNQTRESYIP). Positions 1274-1304 (KCTADSETPSPISGKSLIGDPLNQTRESYIP) are disordered. An LRR 5 repeat occupies 1501 to 1527 (NCLTLELHINGQRLQHQTGFEQTTLET). Basic and acidic residues-rich tracts occupy residues 1773–1784 (ETEKDTLREKRL) and 1793–1804 (TSPHEDSITSRD). Disordered stretches follow at residues 1773–1804 (ETEK…TSRD), 1954–1973 (KSPH…ESGS), 2008–2031 (STHQ…EGRS), and 2083–2103 (TGKS…NPRR). The span at 1964–1973 (ANLTDMESGS) shows a compositional bias: polar residues. Residues 2373 to 2397 (KNQINTIQLSERKIILNPKCLTMKE) form an LRR 6 repeat. Residues 2637 to 2680 (GRHSPASEEMKRQNGRLKMADRSSPQGRPLQAKQSAVSQSPDTA) form a disordered region. Residues 2668–2678 (AKQSAVSQSPD) show a composition bias toward polar residues. LRR repeat units lie at residues 2727 to 2749 (SKIH…KTRA), 2832 to 2855 (IQQQ…VYDS), 2862 to 2889 (IKKL…KLEK), 3433 to 3458 (LSSR…RLEW), and 3630 to 3653 (ILSL…NVKS). Positions 3730-3756 (SLSHSNSNSRTKAGKDKSGTLKGCLPP) are disordered. One copy of the LRR 12 repeat lies at 3875-3898 (MRGITRFCLSSSTQQELSDTMEKC). Disordered stretches follow at residues 4119 to 4260 (ELSH…DGDK), 4293 to 4428 (QGII…KQET), 4729 to 4756 (QESL…LLPQ), 4794 to 4817 (SPLS…QDRT), 4831 to 4859 (MPSL…RLAN), 4928 to 4955 (GVQE…YLNC), 4966 to 4985 (LGKT…SDSG), and 5191 to 5212 (QKVK…SPLH). Composition is skewed to basic and acidic residues over residues 4121 to 4133 (SHQK…EKAD), 4147 to 4176 (KAKD…DKGL), 4192 to 4245 (EPGK…EQQK), 4329 to 4361 (QKAK…DLKG), 4375 to 4401 (EPGK…NRDG), and 4415 to 4426 (EQEKRDGHKSKQ). Residues 4731-4743 (SLPSRQTAPTKPT) show a composition bias toward polar residues. 2 stretches are compositionally biased toward basic and acidic residues: residues 4746 to 4756 (LVKKEKQLLPQ) and 4798 to 4817 (KRKE…QDRT). A compositionally biased stretch (polar residues) spans 5203–5212 (KSPSRSSPLH). One copy of the LRR 13 repeat lies at 5311-5336 (LSQLELDKETHLGNEMLRLKRPILRR). A disordered region spans residues 5467–5496 (LPDTEKTADAEARSGDVRKGKPHRSQKENR). Residues 5469–5496 (DTEKTADAEARSGDVRKGKPHRSQKENR) show a composition bias toward basic and acidic residues. The stretch at 5522 to 5545 (LNAKELVLNINKLEKKVHKDKDEA) is one LRR 14 repeat. Disordered stretches follow at residues 5564–5583 (LDSG…SSCP) and 5763–5792 (QQET…SNDR). Residues 5779–5792 (KFDKPKEDGQSNDR) show a composition bias toward basic and acidic residues. 5 LRR repeats span residues 5901-5924 (KQAL…LFPP), 6259-6282 (PDLR…ECPS), 6419-6442 (HLES…SLQM), 6552-6575 (HFSV…SYAM), and 6613-6637 (QIDL…TFPK). 2 disordered regions span residues 6859-6878 (CKSH…SPDW) and 6916-6950 (APLT…RSDL). The span at 6860-6871 (KSHKSRKYRSSS) shows a compositional bias: basic residues. The segment covering 6937–6950 (HPESQERKKARSDL) has biased composition (basic and acidic residues). The stretch at 7012–7036 (NRPFFFACVPADSLEVIPKTIRWTI) is one LRR 20 repeat.

It is found in the membrane. The chain is Leucine-rich repeat transmembrane protein CCDC168 from Homo sapiens (Human).